We begin with the raw amino-acid sequence, 563 residues long: NAD(P)H-quinone oxidoreductase chain 4 (563 aa).

Transmembrane regions (helical) follow at residues 25–45, 56–76, 90–110, 111–131, 133–153, 157–177, 189–209, 230–250, 264–284, 298–318, 335–355, 356–376, 397–417, 438–458, and 485–505; these read FPWLSLSILFPIVGAFLVPFI, WFALGIALVTFLITVAAYLYG, VSWLPDLGLTWAVGADGISMP, LILLTSFITALAVLAAWPVTF, PKLFFFLILAMDGGQIAVFAV, LLFFLAWELELLPVYLLLAIW, FIIYTAGSSLFILLVALAMGF, GFQLLCYAGLLIAFGVKLPIV, TAPVHMLLAGILLKMGGYALM, FAPLLIVLGVVNIIYAALTSF, MGFVLIGIGSFSALGTSGAML, QMISHGLIGASLFFLVGATYD, FALWTVCALASLALPGMSGFV, IVIAGLAAIGVILTPIYLLSM, and VYIISCLLVPIIGIGLYPRLM.

It belongs to the complex I subunit 4 family.

The protein resides in the cellular thylakoid membrane. The enzyme catalyses a plastoquinone + NADH + (n+1) H(+)(in) = a plastoquinol + NAD(+) + n H(+)(out). It catalyses the reaction a plastoquinone + NADPH + (n+1) H(+)(in) = a plastoquinol + NADP(+) + n H(+)(out). Functionally, NDH-1 shuttles electrons from NAD(P)H, via FMN and iron-sulfur (Fe-S) centers, to quinones in the respiratory chain. The immediate electron acceptor for the enzyme in this species is believed to be plastoquinone. Couples the redox reaction to proton translocation (for every two electrons transferred, four hydrogen ions are translocated across the cytoplasmic membrane), and thus conserves the redox energy in a proton gradient. This chain is NAD(P)H-quinone oxidoreductase chain 4, found in Prochlorococcus marinus (strain MIT 9313).